The following is a 373-amino-acid chain: Putative F-box/kelch-repeat protein At3g19410 (373 aa).

An F-box domain is found at 1–46 (MTIPELPKDLIEEILCYVPATYLKRLRSTCKGWNRLFKDDRRFAKK). 3 Kelch repeats span residues 101 to 148 (RIFH…FVLG), 149 to 200 (YYQE…QCVS), and 329 to 373 (KLYI…EEKS).

In Arabidopsis thaliana (Mouse-ear cress), this protein is Putative F-box/kelch-repeat protein At3g19410.